The primary structure comprises 676 residues: RNA helicase NPH-II (676 aa).

Residues 172 to 347 enclose the Helicase ATP-binding domain; the sequence is FSAWISHRPV…VFLPNPAFIH (176 aa). 185-192 provides a ligand contact to ATP; sequence GGTGVGKT. A DEXH box motif is present at residues 296–299; the sequence is DEVH. The Helicase C-terminal domain maps to 366–535; that stretch reads NPSSRMAYIE…NYILYANKFN (170 aa).

The protein belongs to the DEAD box helicase family. DEAH subfamily. Monomer.

It is found in the virion. It catalyses the reaction ATP + H2O = ADP + phosphate + H(+). Its function is as follows. NTP-dependent helicase that catalyzes unidirectional unwinding of 3'tailed duplex RNAs and plays an important role during transcription of early mRNAs, presumably by preventing R-loop formation behind the elongating RNA polymerase. Might also play a role in the export of newly synthesized mRNA chains out of the core into the cytoplasm. Required for replication and propagation of viral particles. The sequence is that of RNA helicase NPH-II (OPG084) from Bos taurus (Bovine).